The chain runs to 137 residues: MSRRQSRKSAMQLIYEMNMNGDYDKQRIEEFCKYQNINKNDIEFFKEIVLNFIEHIDDIVNIIENNTKQWNLDRINKLDLSILQVGVCEILYVESTPDSVAINEAVELAKEYSTEKSYSFINGILGSVLKRKENASL.

This sequence belongs to the NusB family.

Involved in transcription antitermination. Required for transcription of ribosomal RNA (rRNA) genes. Binds specifically to the boxA antiterminator sequence of the ribosomal RNA (rrn) operons. The chain is Transcription antitermination protein NusB from Finegoldia magna (strain ATCC 29328 / DSM 20472 / WAL 2508) (Peptostreptococcus magnus).